We begin with the raw amino-acid sequence, 243 residues long: Ubiquinone biosynthesis O-methyltransferase (243 aa).

4 residues coordinate S-adenosyl-L-methionine: arginine 44, glycine 64, aspartate 85, and methionine 129.

Belongs to the methyltransferase superfamily. UbiG/COQ3 family.

It catalyses the reaction a 3-demethylubiquinol + S-adenosyl-L-methionine = a ubiquinol + S-adenosyl-L-homocysteine + H(+). The catalysed reaction is a 3-(all-trans-polyprenyl)benzene-1,2-diol + S-adenosyl-L-methionine = a 2-methoxy-6-(all-trans-polyprenyl)phenol + S-adenosyl-L-homocysteine + H(+). It participates in cofactor biosynthesis; ubiquinone biosynthesis. O-methyltransferase that catalyzes the 2 O-methylation steps in the ubiquinone biosynthetic pathway. In Erwinia tasmaniensis (strain DSM 17950 / CFBP 7177 / CIP 109463 / NCPPB 4357 / Et1/99), this protein is Ubiquinone biosynthesis O-methyltransferase.